The sequence spans 528 residues: PC4 and SFRS1-interacting protein (528 aa).

Positions 7–64 (PGDLIFAKMKGYPHWPARVDEVPDGAVKPPTNKLPIFFFGTHETAFLGPKDIFPYSEN) constitute a PWWP domain. A Glycyl lysine isopeptide (Lys-Gly) (interchain with G-Cter in SUMO2) cross-link involves residue Lys75. The interval 86–347 (NNPKVKFSSQ…VEKKRETSMD (262 aa)) is disordered. Over residues 92–106 (FSSQQVSTKQSNASS) the composition is skewed to polar residues. A phosphoserine mark is found at Ser102, Ser105, and Ser106. Over residues 113–135 (KETSVSKEDTDQEEKASNEDVTK) the composition is skewed to basic and acidic residues. Thr115 and Thr122 each carry phosphothreonine. Ser129 carries the phosphoserine modification. Thr141 bears the Phosphothreonine mark. Residues 144–153 (AARRGRKRKA) show a composition bias toward basic residues. The short motif at 146–156 (RRGRKRKAEKQ) is the Nuclear localization signal element. Residues Ser176 and Ser205 each carry the phosphoserine modification. Positions 212-260 (DEDKSKKKGPEEKPPKKQLKKEEEGQKEEEKPRKEPDKKEGKKEVESKR) are enriched in basic and acidic residues. At Ser270 the chain carries Phosphoserine. Residue Thr271 is modified to Phosphothreonine. 2 positions are modified to phosphoserine: Ser272 and Ser274. Basic residues predominate over residues 285 to 300 (KRKGGRHFQAAHRRNM). Residues 303–347 (GQHEKEAADRKRKQEEQMETEQQTKDEGKKPEVKKVEKKRETSMD) are compositionally biased toward basic and acidic residues. Coiled coils occupy residues 304-332 (QHEK…EGKK) and 369-393 (NRCI…KHTE). The integrase-binding domain (IBD) stretch occupies residues 338–415 (VEKKRETSMD…VSQVIMEKST (78 aa)). Ser432 carries the phosphoserine modification. The residue at position 435 (Thr435) is a Phosphothreonine. Position 441 is a phosphoserine (Ser441). The segment covering 444 to 471 (EQRQHEEANKTKDQGKKGPNKKLEKEQT) has biased composition (basic and acidic residues). The disordered stretch occupies residues 444–528 (EQRQHEEANK…VSLKESTLDN (85 aa)). The span at 472 to 492 (GTKSLNGGSDAQESNHPQHNG) shows a compositional bias: polar residues. Basic and acidic residues predominate over residues 496–528 (EESKDSREAGSKTKTPGEEREAEVSLKESTLDN). The residue at position 515 (Arg515) is a Citrulline. Ser520 is modified (phosphoserine). Residue Thr525 is modified to Phosphothreonine.

This sequence belongs to the HDGF family. In terms of assembly, monomer. Interacts with IFRD1/PC4. Interacts (via IBD domain) with POGZ (via IBM motif) and CDCA7L (via IBM motifs). Interacts (via IBD domain) with KMT2A (via IBM motifs) with a moderate affinity whereas interacts with the KMT2A-MEN1 complex with a greater affinity; MEN1 enhances interaction of KMT2A with PSIP1. Interacts (via IBD domain) with IWS1 (via IBM motif), MED1 (via IBM motif) and DBF4 (via IBM motifs). In terms of processing, citrullinated by PADI4.

It localises to the nucleus. Transcriptional coactivator involved in neuroepithelial stem cell differentiation and neurogenesis. Involved in particular in lens epithelial cell gene regulation and stress responses. May play an important role in lens epithelial to fiber cell terminal differentiation. May play a protective role during stress-induced apoptosis. This is PC4 and SFRS1-interacting protein (Psip1) from Rattus norvegicus (Rat).